The chain runs to 223 residues: UPF0173 metal-dependent hydrolase THA_544 (223 aa).

Belongs to the UPF0173 family.

This is UPF0173 metal-dependent hydrolase THA_544 from Thermosipho africanus (strain TCF52B).